Reading from the N-terminus, the 508-residue chain is T-complex protein 1 subunit beta (508 aa).

Belongs to the TCP-1 chaperonin family. As to quaternary structure, component of the T-complex protein 1 (TCP1) complex.

The protein localises to the cytoplasm. Functionally, molecular chaperone; assists the folding of proteins upon ATP hydrolysis. This Encephalitozoon cuniculi (strain GB-M1) (Microsporidian parasite) protein is T-complex protein 1 subunit beta (CCT2).